Reading from the N-terminus, the 209-residue chain is Large ribosomal subunit protein bL25 (209 aa).

The segment at 190–209 is disordered; the sequence is PDASAAPVAAPAAPAKKGKK.

Belongs to the bacterial ribosomal protein bL25 family. CTC subfamily. As to quaternary structure, part of the 50S ribosomal subunit; part of the 5S rRNA/L5/L18/L25 subcomplex. Contacts the 5S rRNA. Binds to the 5S rRNA independently of L5 and L18.

Functionally, this is one of the proteins that binds to the 5S RNA in the ribosome where it forms part of the central protuberance. This is Large ribosomal subunit protein bL25 from Delftia acidovorans (strain DSM 14801 / SPH-1).